The following is a 105-amino-acid chain: Large ribosomal subunit protein bL21 (105 aa).

It belongs to the bacterial ribosomal protein bL21 family. In terms of assembly, part of the 50S ribosomal subunit. Contacts protein L20.

This protein binds to 23S rRNA in the presence of protein L20. This is Large ribosomal subunit protein bL21 from Bacteroides fragilis (strain YCH46).